The following is a 372-amino-acid chain: Forkhead box protein F1-B (372 aa).

Residues 1 to 51 (MTAEIQQPPSQPPAQSSPMSAATDKHGGQPSAMESASCATKTKKTNAGIRR) are disordered. Over residues 13 to 22 (PAQSSPMSAA) the composition is skewed to low complexity. Positions 54–148 (KPPYSYIALI…EEGSFRRRPR (95 aa)) form a DNA-binding region, fork-head.

In terms of tissue distribution, at the late gastrula stage, expressed in the presumptive ventrolateral mesoderm. During neurulation and tailbud stages, expressed in the lateral plate mesoderm and in the neural crest-derived structures of the head and branchial arches. During tailbud stages, expressed in the pronephros and pronephros ducts and in cells that migrate from the dorsolateral plate to the ventral region of the embryo (with the notable exception of the heart). These cells may represent hematopoietic or endothelial progenitor cells.

It is found in the nucleus. In terms of biological role, probable transcription factor. Required for smooth muscle (visceral mesoderm) differentiation during gut development. Also required for normal proliferation of the lateral plate mesoderm. Acts as a downstream mediator of bmp4-signaling. The chain is Forkhead box protein F1-B (foxf1-b) from Xenopus laevis (African clawed frog).